Consider the following 459-residue polypeptide: MAP kinase-interacting serine/threonine-protein kinase 2 (459 aa).

A disordered region spans residues 37–67; that stretch reads DFSPQCEARPDMPSSQPIDIPDAKKRGRKKK. Residues 60–66 carry the Nuclear localization signal motif; the sequence is KKRGRKK. Position 74 is a phosphoserine (Ser74). A Protein kinase domain is found at 84-368; sequence QLQEDVLGEG…AAQVLQHPWV (285 aa). ATP is bound by residues 90-98 and Lys113; that span reads LGEGAHARV. 160-162 lines the staurosporine pocket; sequence EKM. Asp205 (proton acceptor) is an active-site residue. A staurosporine-binding site is contributed by Glu209. 2 positions are modified to phosphothreonine: Thr244 and Thr249. Residues Cys299, Cys311, and Cys314 each coordinate Zn(2+). A Phosphothreonine modification is found at Thr379. Phosphoserine is present on residues Ser431 and Ser434. The short motif at 438–442 is the MAP kinase binding element; it reads LAQRR. The residue at position 446 (Ser446) is a Phosphoserine. Thr450 carries the post-translational modification Phosphothreonine.

Belongs to the protein kinase superfamily. CAMK Ser/Thr protein kinase family. As to quaternary structure, interacts with ESR2 and EIF4E in the nucleus. Monomer. Interacts with the C-terminal regions of EIF4G1 and EIF4G2; this interaction is promoted when MAPK pathways are repressed but repressed upon ERK proteins activation. Also binds to dephosphorylated MAPK3/ERK1 and MAPK1/ERK2. Interaction with phosphorylated MAPK3/ERK1 and MAPK1/ERK2 protects it from dephosphorylation and inactivation. Mg(2+) serves as cofactor. It depends on Zn(2+) as a cofactor. Post-translationally, dual phosphorylation of Thr-244 and Thr-249 activates the kinase. Phosphorylation of Thr-379 activates the kinase. Phosphorylated upon arsenic trioxide As(2)O(3) treatment. Phosphorylated by MAPK1/ERK2, MAPK11 and MAPK14. Dephosphorylated by PP2A. As to expression, ubiquitously expressed in all tissues examined, with high levels in skeletal muscle and low levels in brain.

It is found in the cytoplasm. The protein localises to the nucleus. Its subcellular location is the PML body. The enzyme catalyses L-seryl-[protein] + ATP = O-phospho-L-seryl-[protein] + ADP + H(+). It carries out the reaction L-threonyl-[protein] + ATP = O-phospho-L-threonyl-[protein] + ADP + H(+). With respect to regulation, inhibited by CGP57380 and staurosporine. In terms of biological role, serine/threonine-protein kinase that phosphorylates SFPQ/PSF, HNRNPA1 and EIF4E. May play a role in the response to environmental stress and cytokines. Appears to regulate translation by phosphorylating EIF4E, thus increasing the affinity of this protein for the 7-methylguanosine-containing mRNA cap. Required for mediating PP2A-inhibition-induced EIF4E phosphorylation. Triggers EIF4E shuttling from cytoplasm to nucleus. Enhances the formation of EIF4F complex in pachytene spermatocytes, thus promoting mRNA translation during spermatogenesis. Displays a high basal kinase activity. Acts as a mediator of the suppressive effects of IFNgamma on hematopoiesis. Negative regulator for signals that control generation of arsenic trioxide As(2)O(3)-dependent apoptosis and anti-leukemic responses. Involved in anti-apoptotic signaling in response to serum withdrawal. The polypeptide is MAP kinase-interacting serine/threonine-protein kinase 2 (Mknk2) (Mus musculus (Mouse)).